Here is a 118-residue protein sequence, read N- to C-terminus: MIVGHGIDLQEISAIEKVYQRNPRFAQKILTEQELAIFESFPYKRRLSYLAGRWSGKEAFAKAIGTGIGRLTFQDIEILNDVRGCPILTKSPFKGNSFISISHSGNYVQASVILEDKK.

The Mg(2+) site is built by Asp-8 and Glu-58.

Belongs to the P-Pant transferase superfamily. AcpS family. It depends on Mg(2+) as a cofactor.

The protein resides in the cytoplasm. It catalyses the reaction apo-[ACP] + CoA = holo-[ACP] + adenosine 3',5'-bisphosphate + H(+). Functionally, transfers the 4'-phosphopantetheine moiety from coenzyme A to a Ser of acyl-carrier-protein. The protein is Holo-[acyl-carrier-protein] synthase of Streptococcus pyogenes serotype M5 (strain Manfredo).